The sequence spans 301 residues: Ribosomal RNA small subunit methyltransferase H (301 aa).

S-adenosyl-L-methionine contacts are provided by residues 33 to 35, D52, F79, D100, and Q107; that span reads GGH.

Belongs to the methyltransferase superfamily. RsmH family.

It is found in the cytoplasm. It catalyses the reaction cytidine(1402) in 16S rRNA + S-adenosyl-L-methionine = N(4)-methylcytidine(1402) in 16S rRNA + S-adenosyl-L-homocysteine + H(+). Specifically methylates the N4 position of cytidine in position 1402 (C1402) of 16S rRNA. The protein is Ribosomal RNA small subunit methyltransferase H of Mycoplasmopsis synoviae (strain 53) (Mycoplasma synoviae).